The following is a 32-amino-acid chain: Chlorophyll a-b binding protein 2, chloroplastic (32 aa).

Chlorophyll a-binding residues include Glu19 and His22. Position 24 (Arg24) interacts with chlorophyll b.

It belongs to the light-harvesting chlorophyll a/b-binding (LHC) protein family. As to quaternary structure, the LHC complex consists of chlorophyll a-b binding proteins. Binds at least 14 chlorophylls (8 Chl-a and 6 Chl-b) and carotenoids such as lutein and neoxanthin. is required as a cofactor. In terms of processing, photoregulated by reversible phosphorylation of its threonine residues.

The protein resides in the plastid. Its subcellular location is the chloroplast thylakoid membrane. Its function is as follows. The light-harvesting complex (LHC) functions as a light receptor, it captures and delivers excitation energy to photosystems with which it is closely associated. This is Chlorophyll a-b binding protein 2, chloroplastic from Populus euphratica (Euphrates poplar).